A 104-amino-acid chain; its full sequence is L-rhamnose mutarotase (104 aa).

A substrate-binding site is contributed by Y18. Residue H22 is the Proton donor of the active site. Substrate-binding positions include Y41 and 76–77; that span reads WW.

The protein belongs to the rhamnose mutarotase family. Homodimer.

The protein resides in the cytoplasm. The enzyme catalyses alpha-L-rhamnose = beta-L-rhamnose. It functions in the pathway carbohydrate metabolism; L-rhamnose metabolism. Its function is as follows. Involved in the anomeric conversion of L-rhamnose. This chain is L-rhamnose mutarotase, found in Klebsiella pneumoniae (strain 342).